Here is a 207-residue protein sequence, read N- to C-terminus: High frequency lysogenization protein HflD homolog (207 aa).

The protein belongs to the HflD family.

It is found in the cytoplasm. It localises to the cell inner membrane. The protein is High frequency lysogenization protein HflD homolog of Methylococcus capsulatus (strain ATCC 33009 / NCIMB 11132 / Bath).